The sequence spans 363 residues: Putative lipoate-protein ligase A (363 aa).

The 181-residue stretch at 49 to 229 (STAKHCLLLY…CFLLHKSHST (181 aa)) folds into the BPL/LPL catalytic domain. Residues Arg91, 96–99 (GTVF), and Lys152 contribute to the ATP site. Lys152 is a binding site for (R)-lipoate.

The protein belongs to the LplA family. In terms of assembly, monomer.

The protein localises to the cytoplasm. It carries out the reaction L-lysyl-[lipoyl-carrier protein] + (R)-lipoate + ATP = N(6)-[(R)-lipoyl]-L-lysyl-[lipoyl-carrier protein] + AMP + diphosphate + H(+). It participates in protein modification; protein lipoylation via exogenous pathway; protein N(6)-(lipoyl)lysine from lipoate: step 1/2. Its pathway is protein modification; protein lipoylation via exogenous pathway; protein N(6)-(lipoyl)lysine from lipoate: step 2/2. In terms of biological role, catalyzes both the ATP-dependent activation of exogenously supplied lipoate to lipoyl-AMP and the transfer of the activated lipoyl onto the lipoyl domains of lipoate-dependent enzymes. In Schizosaccharomyces pombe (strain 972 / ATCC 24843) (Fission yeast), this protein is Putative lipoate-protein ligase A (aim22).